Consider the following 232-residue polypeptide: Oxidoreductase 1 (232 aa).

The protein belongs to the MQO family. The cofactor is FAD.

Oxidoreductase; part of the gene cluster that mediates the biosynthesis of elsinochromes, pigments consisting of at least four interconvertible tautomers (A, B, C and D) that have a core phenolic quinone to which various side chains are attached and which play an important role in fungal pathogenesis. The non-reducing polyketide synthase PKS1 was proposed to iteratively catalyze decarboxylation between acetyl-CoA and malonyl-CoA subunits for polyketide chain elongation. The released polyketide undergoes cyclization to form an aromatic ring, and proceeds via serial modification steps to produce the heptaketide back- bone of elsinochrome. As elsinochrome has a symmetrical structure, two identical heptaketides are fused to form a core 1,2-dihydrobenzo-perylene ring structure, which can then be successively modified to produce the various derivatives of elsinochrome. Some of these reactions may be cooperatively carried out, at least in part, by the products of RDT1, OXR1 and PKS1. PRF1, embedded within the elsinochrome cluster possibly functions to stabilize some of the biosynthetic enzymes required for elsinochrome production. As prefoldin is a hexamer containing 2 a and 4 b subunits, additional prefoldin subunits, whose coding genes may not immediately link to the elsinochrome biosynthetic gene cluster, are required to fulfill the chaperone function. In addition, no methyltransferase-coding gene exists within the biosynthetic gene cluster, even though elsinochrome has four methyl groups at positions C3, C7, C8 and C12. Apparently, the identified gene cluster does not contain the entire entourage of genes responsible for elsinochrome biosynthesis. Once elsinochrome is synthesized, it must be exported outside the fungal cells, which is probably accomplished by the ECT1 transporter, to avoid toxicity. This Elsinoe fawcettii (Citrus scab fungus) protein is Oxidoreductase 1.